A 31-amino-acid chain; its full sequence is Cytochrome b6-f complex subunit 6 (31 aa).

Residues 3-23 traverse the membrane as a helical segment; the sequence is VAIDYFLLVGFCFAVTSGLWI.

It belongs to the PetL family. As to quaternary structure, the 4 large subunits of the cytochrome b6-f complex are cytochrome b6, subunit IV (17 kDa polypeptide, PetD), cytochrome f and the Rieske protein, while the 4 small subunits are PetG, PetL, PetM and PetN. The complex functions as a dimer.

Its subcellular location is the plastid. It localises to the chloroplast thylakoid membrane. In terms of biological role, component of the cytochrome b6-f complex, which mediates electron transfer between photosystem II (PSII) and photosystem I (PSI), cyclic electron flow around PSI, and state transitions. PetL is important for photoautotrophic growth as well as for electron transfer efficiency and stability of the cytochrome b6-f complex. The polypeptide is Cytochrome b6-f complex subunit 6 (Phaeodactylum tricornutum (strain CCAP 1055/1)).